The sequence spans 164 residues: Crossover junction endodeoxyribonuclease RuvC (164 aa).

Residues Asp-7, Glu-67, and Asp-139 contribute to the active site. Mg(2+) contacts are provided by Asp-7, Glu-67, and Asp-139.

This sequence belongs to the RuvC family. As to quaternary structure, homodimer which binds Holliday junction (HJ) DNA. The HJ becomes 2-fold symmetrical on binding to RuvC with unstacked arms; it has a different conformation from HJ DNA in complex with RuvA. In the full resolvosome a probable DNA-RuvA(4)-RuvB(12)-RuvC(2) complex forms which resolves the HJ. It depends on Mg(2+) as a cofactor.

The protein resides in the cytoplasm. The enzyme catalyses Endonucleolytic cleavage at a junction such as a reciprocal single-stranded crossover between two homologous DNA duplexes (Holliday junction).. Its function is as follows. The RuvA-RuvB-RuvC complex processes Holliday junction (HJ) DNA during genetic recombination and DNA repair. Endonuclease that resolves HJ intermediates. Cleaves cruciform DNA by making single-stranded nicks across the HJ at symmetrical positions within the homologous arms, yielding a 5'-phosphate and a 3'-hydroxyl group; requires a central core of homology in the junction. The consensus cleavage sequence is 5'-(A/T)TT(C/G)-3'. Cleavage occurs on the 3'-side of the TT dinucleotide at the point of strand exchange. HJ branch migration catalyzed by RuvA-RuvB allows RuvC to scan DNA until it finds its consensus sequence, where it cleaves and resolves the cruciform DNA. In Geobacter metallireducens (strain ATCC 53774 / DSM 7210 / GS-15), this protein is Crossover junction endodeoxyribonuclease RuvC.